The sequence spans 168 residues: Large ribosomal subunit protein uL10 (168 aa).

This sequence belongs to the universal ribosomal protein uL10 family. Part of the ribosomal stalk of the 50S ribosomal subunit. The N-terminus interacts with L11 and the large rRNA to form the base of the stalk. The C-terminus forms an elongated spine to which L12 dimers bind in a sequential fashion forming a multimeric L10(L12)X complex.

Functionally, forms part of the ribosomal stalk, playing a central role in the interaction of the ribosome with GTP-bound translation factors. In Mycoplasmopsis pulmonis (strain UAB CTIP) (Mycoplasma pulmonis), this protein is Large ribosomal subunit protein uL10 (rplJ).